A 271-amino-acid chain; its full sequence is MSDSPERVYPMLLDFVRKETISKNLLRVTLTGEDLIGFPEDQNGSHIKVFFPNQASGILQLPVREGDNVIWPEHKPVPRAYSVRQYRAAVNELDIDFVTHGEETPGGGWALKADIGSQIGLIGPAGPDPLIEPADWHIIAGDLSAVPAISAILEKLPSDAKGYVFIEVDEIEDIHDLVHPEEMAINWLMRNPHDTEPALAKAIKQLPSPEKATSLSAFIAGENQSVINCRKILRNDYQIARDKLYAIPYWKRGKTEEAYHDERHDVMDAVY.

Positions 8–131 constitute an FAD-binding FR-type domain; it reads VYPMLLDFVR…IGPAGPDPLI (124 aa).

It belongs to the SIP oxidoreductase family. In terms of assembly, monomer. The cofactor is FAD.

The protein localises to the cytoplasm. It carries out the reaction 2 a Fe(II)-siderophore + NAD(+) + H(+) = 2 a Fe(III)-siderophore + NADH. Functionally, ferric-siderophore reductase involved in iron removal from the siderophores after their transport into the cell. Acts as a major ferric-vulnibactin reductase catalyzing the reduction of Fe(3+)-vulnibactin, a catecholate siderophore synthesized by V.vulnificus. Catalyzes reduction of Fe(3+)-aerobactin, a citrate-hydroxamate siderophore produced by other bacteria, in the absence of IutB. Catalyzes reduction of Fe(3+)-vibriobactin in vitro. No activity with ferrioxamine B or Fe(3+)-enterobactin. Catalyzes reduction of ferric chelating compounds Fe(3+)-nitrilotriacetic acid (NTA), Fe(3+)-citrate and Fe(3+)-EDTA as well as non-complexed FeCl3 in the presence of NADH as its electron donor and FAD as its cofactor in vitro. Highest activity with Fe(3+)-NTA as electron acceptor. This chain is Ferric vulnibactin reductase VuuB, found in Vibrio vulnificus.